Here is a 104-residue protein sequence, read N- to C-terminus: L-rhamnose mutarotase (104 aa).

Tyr18 contacts substrate. His22 (proton donor) is an active-site residue. Substrate-binding positions include Tyr41 and 76-77; that span reads WW.

Belongs to the rhamnose mutarotase family. Homodimer.

Its subcellular location is the cytoplasm. The catalysed reaction is alpha-L-rhamnose = beta-L-rhamnose. Its pathway is carbohydrate metabolism; L-rhamnose metabolism. Involved in the anomeric conversion of L-rhamnose. The chain is L-rhamnose mutarotase from Lachnoclostridium phytofermentans (strain ATCC 700394 / DSM 18823 / ISDg) (Clostridium phytofermentans).